Reading from the N-terminus, the 312-residue chain is MDGGNQSEGSEFLLLGMSESPEQQQILFWMFLSMYLVTVVGNVLIILAINSDSHLHTPMYFFLANLSFTDLFFVTNTIPKMLVNLQSQNKAISYAGCLTQLYFLVSLVALDNLILAVMAYDRYVAICCPLHYTTAMSPKLCILLLSLCWVLSVLYGLIHTILMTRVTFCGSRKIHYIFCEMYVLLRMACSNIQINHTVLIATGCFIFLIPFGFVIISYVLIIRAILRIPSVSKKYKAFSTCASHLGAVSLFYGTLCMVYLKPLHTFSVKDSVATVMYAVVTPMMNPFIYSLRNKDMHGALGRLLDTHFKRLT.

The Extracellular portion of the chain corresponds to 1-25 (MDGGNQSEGSEFLLLGMSESPEQQQ). Residue Asn5 is glycosylated (N-linked (GlcNAc...) asparagine). A helical membrane pass occupies residues 26–49 (ILFWMFLSMYLVTVVGNVLIILAI). Residues 50–57 (NSDSHLHT) are Cytoplasmic-facing. Residues 58 to 79 (PMYFFLANLSFTDLFFVTNTIP) traverse the membrane as a helical segment. Residues 80–100 (KMLVNLQSQNKAISYAGCLTQ) are Extracellular-facing. Cysteines 97 and 189 form a disulfide. A helical transmembrane segment spans residues 101–120 (LYFLVSLVALDNLILAVMAY). At 121–139 (DRYVAICCPLHYTTAMSPK) the chain is on the cytoplasmic side. A helical transmembrane segment spans residues 140–158 (LCILLLSLCWVLSVLYGLI). The Extracellular segment spans residues 159 to 196 (HTILMTRVTFCGSRKIHYIFCEMYVLLRMACSNIQINH). Residue Asn195 is glycosylated (N-linked (GlcNAc...) asparagine). A helical membrane pass occupies residues 197 to 219 (TVLIATGCFIFLIPFGFVIISYV). Over 220 to 236 (LIIRAILRIPSVSKKYK) the chain is Cytoplasmic. Residues 237 to 259 (AFSTCASHLGAVSLFYGTLCMVY) form a helical membrane-spanning segment. Topologically, residues 260 to 271 (LKPLHTFSVKDS) are extracellular. The helical transmembrane segment at 272–291 (VATVMYAVVTPMMNPFIYSL) threads the bilayer. Residues 292–312 (RNKDMHGALGRLLDTHFKRLT) lie on the Cytoplasmic side of the membrane.

It belongs to the G-protein coupled receptor 1 family.

The protein localises to the cell membrane. In terms of biological role, odorant receptor. This chain is Olfactory receptor 1D2 (OR1D2), found in Gorilla gorilla gorilla (Western lowland gorilla).